The following is a 398-amino-acid chain: NADH-quinone oxidoreductase subunit D (398 aa).

This sequence belongs to the complex I 49 kDa subunit family. As to quaternary structure, NDH-1 is composed of 14 different subunits. Subunits NuoB, C, D, E, F, and G constitute the peripheral sector of the complex.

The protein resides in the cell inner membrane. It catalyses the reaction a quinone + NADH + 5 H(+)(in) = a quinol + NAD(+) + 4 H(+)(out). Its function is as follows. NDH-1 shuttles electrons from NADH, via FMN and iron-sulfur (Fe-S) centers, to quinones in the respiratory chain. The immediate electron acceptor for the enzyme in this species is believed to be ubiquinone. Couples the redox reaction to proton translocation (for every two electrons transferred, four hydrogen ions are translocated across the cytoplasmic membrane), and thus conserves the redox energy in a proton gradient. This Bradyrhizobium sp. (strain ORS 278) protein is NADH-quinone oxidoreductase subunit D.